Reading from the N-terminus, the 157-residue chain is NADPH-dependent 7-cyano-7-deazaguanine reductase (157 aa).

Cys55 (thioimide intermediate) is an active-site residue. Asp62 (proton donor) is an active-site residue. Substrate contacts are provided by residues 77-79 (VES) and 96-97 (HE).

Belongs to the GTP cyclohydrolase I family. QueF type 1 subfamily.

Its subcellular location is the cytoplasm. The enzyme catalyses 7-aminomethyl-7-carbaguanine + 2 NADP(+) = 7-cyano-7-deazaguanine + 2 NADPH + 3 H(+). The protein operates within tRNA modification; tRNA-queuosine biosynthesis. Functionally, catalyzes the NADPH-dependent reduction of 7-cyano-7-deazaguanine (preQ0) to 7-aminomethyl-7-deazaguanine (preQ1). This chain is NADPH-dependent 7-cyano-7-deazaguanine reductase, found in Neisseria meningitidis serogroup C / serotype 2a (strain ATCC 700532 / DSM 15464 / FAM18).